Consider the following 146-residue polypeptide: Globin (146 aa).

N-acetylalanine is present on A1. A Globin domain is found at 1–146; sequence ALTEPQKTAL…LLTMLIKAHS (146 aa). Heme b contacts are provided by H65 and H97.

It belongs to the globin family. In terms of assembly, homodimer.

This chain is Globin, found in Buccinum undatum (Common whelk).